The chain runs to 256 residues: Late embryogenesis abundant protein 32 (256 aa).

Residues methionine 1–lysine 14 are compositionally biased toward basic and acidic residues. The disordered stretch occupies residues methionine 1–glutamate 20. The short motif at glutamine 5 to proline 9 is the Nuclear localization signal (NLS) element. SMP domains lie at valine 13–isoleucine 66, isoleucine 130–threonine 187, and isoleucine 195–arginine 253.

The protein belongs to the LEA type SMP family. Embryo specific, only in dry mature seeds. Expressed at low levels.

The protein resides in the cytoplasm. The protein localises to the nucleus. In terms of biological role, LEA proteins are late embryonic proteins abundant in higher plant seed embryos. The function of those proteins is not known. This chain is Late embryogenesis abundant protein 32, found in Arabidopsis thaliana (Mouse-ear cress).